The chain runs to 600 residues: Kynurenine 3-monooxygenase (600 aa).

Residues 217-242 are disordered; it reads GDSCADEPSGCGGRKQATTKSQGSEY.

Belongs to the aromatic-ring hydroxylase family. KMO subfamily. FAD is required as a cofactor.

The protein resides in the mitochondrion outer membrane. It carries out the reaction L-kynurenine + NADPH + O2 + H(+) = 3-hydroxy-L-kynurenine + NADP(+) + H2O. It functions in the pathway cofactor biosynthesis; NAD(+) biosynthesis; quinolinate from L-kynurenine: step 1/3. Functionally, catalyzes the hydroxylation of L-kynurenine (L-Kyn) to form 3-hydroxy-L-kynurenine (L-3OHKyn). Required for synthesis of quinolinic acid. This chain is Kynurenine 3-monooxygenase, found in Mycosarcoma maydis (Corn smut fungus).